A 93-amino-acid chain; its full sequence is Protein IDA-LIKE 4 (93 aa).

Positions 1–35 (MYPTRPHYWRRRLSINRPQAFLLLILCLFFIHHCD) are cleaved as a signal peptide.

In terms of tissue distribution, expressed in mainly in buds. Lower levels in roots. Detected at the base of pedicel, in the floral and funicule abscission zones, in vascular tissues, in guard cells of young seedlings and in hydathodes.

It localises to the secreted. It is found in the extracellular space. In terms of biological role, may be involved in floral abscission. This Arabidopsis thaliana (Mouse-ear cress) protein is Protein IDA-LIKE 4 (IDL4).